The primary structure comprises 292 residues: Nucleophosmin (292 aa).

N-acetylmethionine is present on Met1. Residues 1–117 (MEDSMDMDMS…PVHISGQHLV (117 aa)) form a necessary for interaction with APEX1 region. The interval 1–185 (MEDSMDMDMS…DDDDFDEEET (185 aa)) is required for interaction with SENP3. Ser4 carries the phosphoserine; by PLK1 and PLK2 modification. Residue Ser10 is modified to Phosphoserine. Lys27 is covalently cross-linked (Glycyl lysine isopeptide (Lys-Gly) (interchain with G-Cter in SUMO2)). An N6-acetyllysine; alternate modification is found at Lys32. A Glycyl lysine isopeptide (Lys-Gly) (interchain with G-Cter in SUMO1); alternate cross-link involves residue Lys32. A Glycyl lysine isopeptide (Lys-Gly) (interchain with G-Cter in SUMO2); alternate cross-link involves residue Lys32. At Ser43 the chain carries Phosphoserine. At Tyr67 the chain carries Phosphotyrosine. A Phosphoserine modification is found at Ser70. 2 positions are modified to phosphothreonine: Thr75 and Thr95. Phosphoserine occurs at positions 125 and 139. Residues 138 to 248 (MSGKRSAPGG…PSSVEDIKAK (111 aa)) are disordered. Residue Lys141 forms a Glycyl lysine isopeptide (Lys-Gly) (interchain with G-Cter in SUMO2) linkage. Lys150 carries the post-translational modification N6-acetyllysine; alternate. Residue Lys150 forms a Glycyl lysine isopeptide (Lys-Gly) (interchain with G-Cter in SUMO2); alternate linkage. A Nuclear localization signal motif is present at residues 152 to 157 (PQKKVK). Lys154 is modified (N6-acetyllysine). Positions 159-186 (DEDDEDDDEDDEDDEDDDDDDFDEEETE) are enriched in acidic residues. The interval 186–214 (EEKVPVKKSVRDTPAKNAQKSNQNGKDLK) is interaction with NOP2. Residues 187–199 (EKVPVKKSVRDTP) are compositionally biased toward basic and acidic residues. A Nuclear localization signal motif is present at residues 190–196 (PVKKSVR). The residue at position 198 (Thr198) is a Phosphothreonine; by CDK1 and CDK2. Polar residues predominate over residues 201 to 210 (KNAQKSNQNG). Ser206 bears the ADP-ribosylserine mark. Position 211 is an N6-acetyllysine (Lys211). Residue Lys214 forms a Glycyl lysine isopeptide (Lys-Gly) (interchain with G-Cter in SUMO2) linkage. The residue at position 217 (Thr217) is a Phosphothreonine; by CDK1. Over residues 221-233 (KGQESFKKQEKTP) the composition is skewed to basic and acidic residues. Residue Ser225 is modified to Phosphoserine. Lys227 is subject to N6-acetyllysine. At Lys228 the chain carries N6-acetyllysine; alternate. A Glycyl lysine isopeptide (Lys-Gly) (interchain with G-Cter in SUMO); alternate cross-link involves residue Lys228. Phosphothreonine; by CDK1 is present on residues Thr232 and Thr235. Residues Ser240 and Ser241 each carry the phosphoserine modification. The tract at residues 241–292 (SVEDIKAKMQASIEKGGSLPKVEAKFINYVKNCFRMTDQEAIQDLWQWRKSL) is required for nucleolar localization. A Glycyl lysine isopeptide (Lys-Gly) (interchain with G-Cter in SUMO1); alternate cross-link involves residue Lys246. Residues Lys246 and Lys248 each participate in a glycyl lysine isopeptide (Lys-Gly) (interchain with G-Cter in SUMO2); alternate cross-link. At Lys248 the chain carries N6-acetyllysine; alternate. The residue at position 252 (Ser252) is a Phosphoserine. Position 255 is an N6-acetyllysine; alternate (Lys255). A Glycyl lysine isopeptide (Lys-Gly) (interchain with G-Cter in SUMO1); alternate cross-link involves residue Lys255. Residue Lys255 forms a Glycyl lysine isopeptide (Lys-Gly) (interchain with G-Cter in SUMO2); alternate linkage. Ser258 is subject to Phosphoserine. Residues Lys261, Lys265, and Lys271 each participate in a glycyl lysine isopeptide (Lys-Gly) (interchain with G-Cter in SUMO2); alternate cross-link. Residue Lys261 forms a Glycyl lysine isopeptide (Lys-Gly) (interchain with G-Cter in SUMO); alternate linkage. N6-acetyllysine; alternate occurs at positions 265 and 271. Residue Lys265 forms a Glycyl lysine isopeptide (Lys-Gly) (interchain with G-Cter in SUMO1); alternate linkage. Position 265 is an N6-succinyllysine; alternate (Lys265). The residue at position 277 (Thr277) is a Phosphothreonine. Lys290 carries the post-translational modification N6-acetyllysine.

This sequence belongs to the nucleoplasmin family. As to quaternary structure, decamer formed by two pentameric rings associated in a head-to-head fashion. Disulfide-linked dimers under certain conditions. Interacts with NSUN2 and SENP3. The SWAP complex consists of NPM1, NCL, PARP1 and SWAP70. Interacts with the methylated form of RPS10. Interacts (via N-terminal domain) with APEX1; the interaction is RNA-dependent and decreases peroxide-damaged cells. Interacts with NEK2. Interacts with ROCK2 and BRCA2. Interacts with RPGR. Interacts with CENPW. Interacts with EIF2AK2/PKR. Interacts with DDX31; this interaction prevents interaction between NPM1 and HDM2. Interacts with MYC; competitive with NOP53. Interacts with NOP53; the interaction is direct and competitive with MYC. Interacts with LRRC34. Interacts with RRP1B. Interacts with NPM3. Interacts with ALKBH2. Interacts with TTF1 (via C-terminal region). Interacts with NOP2. Interacts with ARID3C (via REKLES DOMAIN); the interaction mediates ARID3C nuclear shuttling. Acetylated at C-terminal lysine residues, thereby increasing affinity to histones. In terms of processing, ADP-ribosylated. Post-translationally, phosphorylated at Ser-4 by PLK1 and PLK2. Phosphorylation at Ser-4 by PLK2 in S phase is required for centriole duplication and is sufficient to trigger centriole replication. Phosphorylation at Ser-4 by PLK1 takes place during mitosis. Phosphorylated by CDK2 at Ser-125 and Thr-198. Phosphorylation at Thr-198 may trigger initiation of centrosome duplication. Phosphorylated by CDK1 at Thr-198, Thr-217, Thr-232 and Thr-235 during cell mitosis. When these four sites are phosphorated, RNA-binding activity seem to be abolished. May be phosphorylated at Ser-70 by NEK2. The Thr-198 phosphorylated form has higher affinity for ROCK2. Sumoylated by ARF. In terms of processing, ubiquitinated. Ubiquitination leads to proteasomal degradation. Deubiquitinated by USP36. Expressed in B-cells that have been induced to switch to various Ig isotypes.

It is found in the nucleus. Its subcellular location is the nucleolus. The protein localises to the nucleoplasm. The protein resides in the cytoplasm. It localises to the cytoskeleton. It is found in the microtubule organizing center. Its subcellular location is the centrosome. Involved in diverse cellular processes such as ribosome biogenesis, centrosome duplication, protein chaperoning, histone assembly, cell proliferation, and regulation of tumor suppressors p53/TP53 and ARF. Binds ribosome presumably to drive ribosome nuclear export. Associated with nucleolar ribonucleoprotein structures and bind single-stranded nucleic acids. Acts as a chaperonin for the core histones H3, H2B and H4. Stimulates APEX1 endonuclease activity on apurinic/apyrimidinic (AP) double-stranded DNA but inhibits APEX1 endonuclease activity on AP single-stranded RNA. May exert a control of APEX1 endonuclease activity within nucleoli devoted to repair AP on rDNA and the removal of oxidized rRNA molecules. In concert with BRCA2, regulates centrosome duplication. Regulates centriole duplication: phosphorylation by PLK2 is able to trigger centriole replication. Negatively regulates the activation of EIF2AK2/PKR and suppresses apoptosis through inhibition of EIF2AK2/PKR autophosphorylation. Antagonizes the inhibitory effect of ATF5 on cell proliferation and relieves ATF5-induced G2/M blockade. In complex with MYC enhances the transcription of MYC target genes. May act as chaperonin or cotransporter in the nucleolar localization of transcription termination factor TTF1. This is Nucleophosmin (Npm1) from Mus musculus (Mouse).